Here is a 302-residue protein sequence, read N- to C-terminus: Sulfate adenylyltransferase subunit 2 (302 aa).

This sequence belongs to the PAPS reductase family. CysD subfamily. In terms of assembly, heterodimer composed of CysD, the smaller subunit, and CysN.

The enzyme catalyses sulfate + ATP + H(+) = adenosine 5'-phosphosulfate + diphosphate. It participates in sulfur metabolism; hydrogen sulfide biosynthesis; sulfite from sulfate: step 1/3. Functionally, with CysN forms the ATP sulfurylase (ATPS) that catalyzes the adenylation of sulfate producing adenosine 5'-phosphosulfate (APS) and diphosphate, the first enzymatic step in sulfur assimilation pathway. APS synthesis involves the formation of a high-energy phosphoric-sulfuric acid anhydride bond driven by GTP hydrolysis by CysN coupled to ATP hydrolysis by CysD. The protein is Sulfate adenylyltransferase subunit 2 of Bacteroides thetaiotaomicron (strain ATCC 29148 / DSM 2079 / JCM 5827 / CCUG 10774 / NCTC 10582 / VPI-5482 / E50).